A 67-amino-acid polypeptide reads, in one-letter code: Ferredoxin FdxE (67 aa).

Cys-10, Val-11, Gln-15, Cys-16, and Cys-54 together coordinate [3Fe-4S] cluster.

Interacts with the cytochrome P450 143 with high affinity (Kd=84 nM). Requires [3Fe-4S] cluster as cofactor.

Functionally, ferredoxin that is the redox partner of cytochrome CYP143, a cytochrome P450 encoded by an adjacent gene. The protein is Ferredoxin FdxE of Mycobacterium tuberculosis (strain ATCC 25618 / H37Rv).